The sequence spans 134 residues: Interleukin-5 (134 aa).

An N-terminal signal peptide occupies residues Met1 to Ala19. O-linked (GalNAc...) threonine glycosylation occurs at Thr22. N-linked (GlcNAc...) asparagine glycans are attached at residues Asn47 and Asn90.

Belongs to the IL-5 family. As to quaternary structure, homodimer; disulfide-linked. Interacts with IL5RA. Interacts with CSF2RB.

The protein resides in the secreted. Functionally, homodimeric cytokine expressed predominantly by T-lymphocytes and NK cells that plays an important role in the survival, differentiation, and chemotaxis of eosinophils. Also acts on activated and resting B-cells to induce immunoglobulin production, growth, and differentiation. Mechanistically, exerts its biological effects through a receptor composed of IL5RA subunit and the cytokine receptor common subunit beta/CSF2RB. Binding to the receptor leads to activation of various kinases including LYN, SYK and JAK2 and thereby propagates signals through the RAS-MAPK and JAK-STAT5 pathways respectively. The protein is Interleukin-5 (IL5) of Cercocebus atys (Sooty mangabey).